The chain runs to 232 residues: Sugar fermentation stimulation protein homolog (232 aa).

This sequence belongs to the SfsA family.

This Alkaliphilus metalliredigens (strain QYMF) protein is Sugar fermentation stimulation protein homolog.